The primary structure comprises 299 residues: Ent-kaurene oxidase-like protein 1 (299 aa).

The chain crosses the membrane as a helical span at residues 16 to 36 (AVVGVFVAAAVVGGFVAAVAL).

This sequence belongs to the cytochrome P450 family. Expressed in roots and panicles.

It localises to the membrane. The sequence is that of Ent-kaurene oxidase-like protein 1 from Oryza sativa subsp. japonica (Rice).